A 408-amino-acid chain; its full sequence is LL-diaminopimelate aminotransferase (408 aa).

Substrate-binding residues include tyrosine 15 and glycine 42. Pyridoxal 5'-phosphate is bound by residues tyrosine 72, 108–109, tyrosine 132, asparagine 187, tyrosine 218, and 246–248; these read SK and SFS. Residues lysine 109, tyrosine 132, and asparagine 187 each contribute to the substrate site. N6-(pyridoxal phosphate)lysine is present on lysine 249. Pyridoxal 5'-phosphate is bound by residues arginine 257 and asparagine 292. 2 residues coordinate substrate: asparagine 292 and arginine 388.

It belongs to the class-I pyridoxal-phosphate-dependent aminotransferase family. LL-diaminopimelate aminotransferase subfamily. Homodimer. Requires pyridoxal 5'-phosphate as cofactor.

The catalysed reaction is (2S,6S)-2,6-diaminopimelate + 2-oxoglutarate = (S)-2,3,4,5-tetrahydrodipicolinate + L-glutamate + H2O + H(+). The protein operates within amino-acid biosynthesis; L-lysine biosynthesis via DAP pathway; LL-2,6-diaminopimelate from (S)-tetrahydrodipicolinate (aminotransferase route): step 1/1. Functionally, involved in the synthesis of meso-diaminopimelate (m-DAP or DL-DAP), required for both lysine and peptidoglycan biosynthesis. Catalyzes the direct conversion of tetrahydrodipicolinate to LL-diaminopimelate. In Synechococcus sp. (strain RCC307), this protein is LL-diaminopimelate aminotransferase.